We begin with the raw amino-acid sequence, 479 residues long: Ribosomal RNA small subunit methyltransferase F (479 aa).

Residues 125-131 (AAAPGSK), glutamate 149, aspartate 176, and aspartate 194 each bind S-adenosyl-L-methionine. Cysteine 247 acts as the Nucleophile in catalysis.

Belongs to the class I-like SAM-binding methyltransferase superfamily. RsmB/NOP family.

The protein localises to the cytoplasm. The catalysed reaction is cytidine(1407) in 16S rRNA + S-adenosyl-L-methionine = 5-methylcytidine(1407) in 16S rRNA + S-adenosyl-L-homocysteine + H(+). Functionally, specifically methylates the cytosine at position 1407 (m5C1407) of 16S rRNA. This chain is Ribosomal RNA small subunit methyltransferase F, found in Escherichia coli O81 (strain ED1a).